The sequence spans 40 residues: Competence and sporulation stimulating factor (40 aa).

Positions 1 to 35 (MKLKSKLFVICLAAAAIFTAAGVSANAEALDFHVT) are excised as a propeptide.

The protein belongs to the Phr family. Interacts with RapC and inhibits its interaction with ComA. In terms of processing, secreted with a propeptide domain, which is cleaved in the cell wall by the secreted serine proteases subtilisin, Epr and Vpr to produce a mature signaling peptide. Contains a predicted signal peptide cleavage site in the N-terminal region, however the propeptide is probably subject to only one processing event, at the N-terminal end of the mature peptide.

The protein resides in the secreted. It is found in the cytoplasm. Its subcellular location is the host cell. Signaling molecule that serves as a cell density signal for both genetic competence development and sporulation. Secreted during production, but the mature peptide acts intracellularly, indicating that it needs to be imported into the cell to function. At low concentrations, CSF stimulates expression of the genes controlled by ComA, a transcriptional factor that regulates the development of genetic competence. It includes the srfA operon, which encodes a small protein, ComS, required for competence development, and the surfactin biosynthetic enzymes. Acts by inhibiting RapC, which regulates the activity of ComA. At high concentrations, it inhibits expression of those same ComA-controlled genes, maybe by inhibiting activity of the kinase ComP. In addition, high concentrations of CSF can stimulate sporulation under some conditions. Also inhibits RapB activity, with lower efficiency, but does not act on RapA. Is probably involved in the quorum sensing control of sporulation. CSF is a species-specific signaling molecule that partially compensates for the lack of ComX-mediated communication between different strains of B.subtilis. In terms of biological role, b.subtilis is a well-characterized soil and water saprophyte, but it is also found in enteric flora of many species, including humans. In this environment, CSF can be transported into human intestinal epithelia via OCTN2, a host cell membrane transporter, and can induce cytoprotective heat shock proteins contributing to intestinal homeostasis. Its function is as follows. In addition, in non-domesticated swarming strains of B.subtilis, the residual propeptide exposed on the exterior of the cytoplasmic membrane may have an extracellular role in swarming. This function is probably not dependent on CSF. This chain is Competence and sporulation stimulating factor, found in Bacillus subtilis (strain 168).